Reading from the N-terminus, the 109-residue chain is Spermidine export protein MdtI (109 aa).

Helical transmembrane passes span 6–26, 36–56, 64–84, and 88–108; these read WIHA…NVFL, IYGI…SQAV, AYAL…WVLF, and LNNK…LIKL.

It belongs to the drug/metabolite transporter (DMT) superfamily. Small multidrug resistance (SMR) (TC 2.A.7.1) family. MdtI subfamily. In terms of assembly, forms a complex with MdtJ.

It localises to the cell inner membrane. Functionally, catalyzes the excretion of spermidine. The chain is Spermidine export protein MdtI from Klebsiella pneumoniae subsp. pneumoniae (strain ATCC 700721 / MGH 78578).